The sequence spans 626 residues: MDDQNRNLILATGLSFVVILVWFLLFPPPEMVEDPNAIPPAAETGGVETDTGIALTPPVTVADAPAGADTTAPSEVALSEAARIDIDTPAVEGSISLLGGRIDDLSLRNYFTEVDGDQIVRLLSPVGSDDPYYALYGWTPSGDLGYADVPTSDTPWELESGTILTPDSPITLAWDNGSGLIFRRTIEIDDRFMFQVTQSVENTGGAEVNLAPYGIVARHGLPSDLQNFFILHEGVVRKVDGELSELGYSDLPDLDIIAREGVPAEVMEVETNGWIGFTDKYWMTTLIPGENQSFVSVVKYVPSAEIYQTEARLPYMSIAPGETAEVTTQLFAGAKEAEAIRDYENAEPGLIASLFGAEQDASRGEIPRFIDSIDWGWFYFLTKPLFWLLHWLNGAIGNMGLAIISLTLIVKAVLFPLAYRSYVSMAKMKELQPEIEKLKESAGDDRQKLQQGMMELYKKNKVNPAGGCLPILLQIPIFFSLYKVIFVTLELRHAPFFGWLNDLSAPDSSSIINLYGLLPNPAPEPESIMALIFIGILPLLLGISMWLQQKLNPAPTDAMQAQIFAWLPWVFMFMLGSFASGLLVYWIANNTLTFTQQYLIMRSQGFKPDVFGNIRSSFKKKAKEEK.

5 helical membrane-spanning segments follow: residues Leu-8–Pro-28, Met-399–Tyr-419, Leu-469–Leu-489, Ser-527–Leu-547, and Ile-563–Leu-583.

It belongs to the OXA1/ALB3/YidC family. Type 1 subfamily. In terms of assembly, interacts with the Sec translocase complex via SecD. Specifically interacts with transmembrane segments of nascent integral membrane proteins during membrane integration.

It is found in the cell inner membrane. Functionally, required for the insertion and/or proper folding and/or complex formation of integral membrane proteins into the membrane. Involved in integration of membrane proteins that insert both dependently and independently of the Sec translocase complex, as well as at least some lipoproteins. Aids folding of multispanning membrane proteins. In Jannaschia sp. (strain CCS1), this protein is Membrane protein insertase YidC.